Reading from the N-terminus, the 257-residue chain is MDVIPAIDLLEGRCVRLYQGDYDRSQVFSENPVDVAKQWVDEGATRLHIVDLDGAKAGKVVNLGAIEAIAQAISIPIEIGGGLRDRSSVEQVFNLGVQWAILGTVAVEQPQLVQELCQQYPGQIIIGIDARNGLVATRGWLETSEVLATQLAVQMQEMGAAAIIYTDIHRDGTLAGPNLDALRELAAAISIPVIASGGVSSVTDLLSLLALEPQGVTGVIVGRALYTGDINLKEALQAIGPGRIQDIPPNLDFSSFA.

Catalysis depends on aspartate 8, which acts as the Proton acceptor. Aspartate 129 (proton donor) is an active-site residue.

The protein belongs to the HisA/HisF family.

The protein localises to the cytoplasm. It carries out the reaction 1-(5-phospho-beta-D-ribosyl)-5-[(5-phospho-beta-D-ribosylamino)methylideneamino]imidazole-4-carboxamide = 5-[(5-phospho-1-deoxy-D-ribulos-1-ylimino)methylamino]-1-(5-phospho-beta-D-ribosyl)imidazole-4-carboxamide. It participates in amino-acid biosynthesis; L-histidine biosynthesis; L-histidine from 5-phospho-alpha-D-ribose 1-diphosphate: step 4/9. This is 1-(5-phosphoribosyl)-5-[(5-phosphoribosylamino)methylideneamino] imidazole-4-carboxamide isomerase from Trichormus variabilis (strain ATCC 29413 / PCC 7937) (Anabaena variabilis).